We begin with the raw amino-acid sequence, 328 residues long: Phosphate acyltransferase (328 aa).

It belongs to the PlsX family. As to quaternary structure, homodimer. Probably interacts with PlsY.

The protein resides in the cytoplasm. The enzyme catalyses a fatty acyl-[ACP] + phosphate = an acyl phosphate + holo-[ACP]. It participates in lipid metabolism; phospholipid metabolism. Functionally, catalyzes the reversible formation of acyl-phosphate (acyl-PO(4)) from acyl-[acyl-carrier-protein] (acyl-ACP). This enzyme utilizes acyl-ACP as fatty acyl donor, but not acyl-CoA. This is Phosphate acyltransferase from Mycoplasmoides gallisepticum (strain R(low / passage 15 / clone 2)) (Mycoplasma gallisepticum).